The sequence spans 612 residues: Lysophospholipase (612 aa).

Positions aspartate 1–arginine 9 are cleaved as a signal peptide. One can recognise a PLA2c domain in the interval serine 24–asparagine 571. N-linked (GlcNAc...) asparagine glycans are attached at residues asparagine 41, asparagine 81, asparagine 116, asparagine 150, asparagine 223, asparagine 267, asparagine 306, asparagine 335, asparagine 427, asparagine 440, asparagine 446, asparagine 477, asparagine 498, asparagine 526, asparagine 532, asparagine 567, and asparagine 571.

The protein belongs to the lysophospholipase family. Post-translationally, N-glycosylated.

It is found in the secreted. The catalysed reaction is a 1-acyl-sn-glycero-3-phosphocholine + H2O = sn-glycerol 3-phosphocholine + a fatty acid + H(+). In terms of biological role, catalyzes the release of fatty acids from lysophospholipids. The polypeptide is Lysophospholipase (Penicillium chrysogenum (Penicillium notatum)).